Here is a 326-residue protein sequence, read N- to C-terminus: Olfactory receptor 8A1 (326 aa).

The Extracellular portion of the chain corresponds to 1 to 45; that stretch reads MGFLSPMHPCRPPTQRRMAAGNHSTVTEFILKGLTKRADLQLPLF. The N-linked (GlcNAc...) asparagine glycan is linked to Asn-22. Residues 46–66 form a helical membrane-spanning segment; that stretch reads LLFLGIYLVTIVGNLGMITLI. Residues 67-77 are Cytoplasmic-facing; that stretch reads CLNSQLHTPMY. Residues 78 to 100 traverse the membrane as a helical segment; it reads YFLSNLSLMDLCYSSVITPKMLV. Topologically, residues 101 to 116 are extracellular; sequence NFVSEKNIISYAGCMS. Cys-114 and Cys-195 form a disulfide bridge. A helical membrane pass occupies residues 117 to 137; sequence QLYFFLVFVIAECYMLTVMAY. Residues 138–150 lie on the Cytoplasmic side of the membrane; that stretch reads DRYVAICHPLLYN. The chain crosses the membrane as a helical span at residues 151-171; sequence IIMSHHTCLLLVAVVYAIGLI. Over 172–222 the chain is Extracellular; that stretch reads GSTIETGLMLKLPYCEHLISHYFCDILPLMKLSCSSTYDVEMTVFFSAGFN. A helical transmembrane segment spans residues 223-243; the sequence is IIVTSLTVLVSYTFILSSILG. Residues 244-260 lie on the Cytoplasmic side of the membrane; the sequence is ISTTEGRSKAFSTCSSH. A helical membrane pass occupies residues 261–281; the sequence is LAAVGMFYGSTAFMYLKPSTI. Residues 282–287 are Extracellular-facing; it reads SSLTQE. Residues 288–308 form a helical membrane-spanning segment; it reads NVASVFYTTVIPMLNPLIYSL. Residues 309-326 lie on the Cytoplasmic side of the membrane; the sequence is RNKEVKAAVQKTLRGKLF.

It belongs to the G-protein coupled receptor 1 family.

The protein resides in the cell membrane. Functionally, odorant receptor. This is Olfactory receptor 8A1 (OR8A1) from Homo sapiens (Human).